Here is a 555-residue protein sequence, read N- to C-terminus: Hydrogenase-4 component G (555 aa).

The protein belongs to the complex I 49 kDa subunit family. Requires [4Fe-4S] cluster as cofactor.

Its function is as follows. Possible component of hydrogenase 4. This Escherichia coli (strain K12) protein is Hydrogenase-4 component G.